The primary structure comprises 428 residues: Serine--tRNA ligase (428 aa).

234–236 (TAE) provides a ligand contact to L-serine. 265–267 (RRE) is an ATP binding site. Glutamate 288 contributes to the L-serine binding site. ATP is bound at residue 352 to 355 (EISS). Serine 388 contacts L-serine.

The protein belongs to the class-II aminoacyl-tRNA synthetase family. Type-1 seryl-tRNA synthetase subfamily. In terms of assembly, homodimer. The tRNA molecule binds across the dimer.

Its subcellular location is the cytoplasm. It carries out the reaction tRNA(Ser) + L-serine + ATP = L-seryl-tRNA(Ser) + AMP + diphosphate + H(+). The catalysed reaction is tRNA(Sec) + L-serine + ATP = L-seryl-tRNA(Sec) + AMP + diphosphate + H(+). Its pathway is aminoacyl-tRNA biosynthesis; selenocysteinyl-tRNA(Sec) biosynthesis; L-seryl-tRNA(Sec) from L-serine and tRNA(Sec): step 1/1. Functionally, catalyzes the attachment of serine to tRNA(Ser). Is also able to aminoacylate tRNA(Sec) with serine, to form the misacylated tRNA L-seryl-tRNA(Sec), which will be further converted into selenocysteinyl-tRNA(Sec). The sequence is that of Serine--tRNA ligase from Synechococcus elongatus (strain ATCC 33912 / PCC 7942 / FACHB-805) (Anacystis nidulans R2).